The sequence spans 181 residues: Protein FAM237A (181 aa).

Positions 1-33 are cleaved as a signal peptide; that stretch reads MADPGNRGGIHRPLSFTCSLLIVGMCCVSPFFC. Leu113 is subject to Leucine amide. Positions 114–181 are cleaved as a propeptide — removed in the mature form; that stretch reads GRRQLVGEEE…GKVNLEIKRK (68 aa).

The active form requires C-terminal amidation and disulfide bond formation. In terms of tissue distribution, expressed in the pituitary, testis, and heart and at lower levels in the brain.

It localises to the secreted. Functionally, may be capable of activating GPR83 via the GNAQ signaling pathway. The protein is Protein FAM237A of Homo sapiens (Human).